The chain runs to 86 residues: Large ribosomal subunit protein uL23 (86 aa).

Belongs to the universal ribosomal protein uL23 family. In terms of assembly, part of the 50S ribosomal subunit. Contacts protein L29.

In terms of biological role, binds to 23S rRNA. One of the proteins that surrounds the polypeptide exit tunnel on the outside of the ribosome. The polypeptide is Large ribosomal subunit protein uL23 (Methanosphaera stadtmanae (strain ATCC 43021 / DSM 3091 / JCM 11832 / MCB-3)).